We begin with the raw amino-acid sequence, 218 residues long: 3,4-dihydroxy-2-butanone 4-phosphate synthase (218 aa).

Residues 37-38, Asp42, 150-154, and Glu174 contribute to the D-ribulose 5-phosphate site; these read RE and RSGHT. Glu38 lines the Mg(2+) pocket. His153 is a binding site for Mg(2+).

It belongs to the DHBP synthase family. As to quaternary structure, homodimer. Mg(2+) is required as a cofactor. The cofactor is Mn(2+).

The catalysed reaction is D-ribulose 5-phosphate = (2S)-2-hydroxy-3-oxobutyl phosphate + formate + H(+). It functions in the pathway cofactor biosynthesis; riboflavin biosynthesis; 2-hydroxy-3-oxobutyl phosphate from D-ribulose 5-phosphate: step 1/1. Functionally, catalyzes the conversion of D-ribulose 5-phosphate to formate and 3,4-dihydroxy-2-butanone 4-phosphate. This is 3,4-dihydroxy-2-butanone 4-phosphate synthase from Hamiltonella defensa subsp. Acyrthosiphon pisum (strain 5AT).